Here is a 94-residue protein sequence, read N- to C-terminus: RING finger protein Z (94 aa).

Residues 1–22 (MGNCNKPPKRPPNTQTSAAQPS) are disordered. A lipid anchor (N-myristoyl glycine; by host) is attached at Gly-2. Residues 39–75 (CKCCWFADTNLITCNDHYLCLRCHQTMLRNSELCHIC) form an RING-type; atypical zinc finger. The PTAP/PSAP motif signature appears at 89–92 (PSAP).

The protein belongs to the arenaviridae Z protein family. In terms of assembly, interacts with protein NP; this interaction probably directs the encapsidated genome to budding sites. Interacts (via RING domain) with polymerase L; this interaction inhibits viral transcription and replication, Z partially blocks the product exit tunnel for the releasing nascent RNA product. Interacts with the glycoprotein complex; this interaction plays a role in virion budding. Interacts with host eIF4E; this interaction results in eIF4E reduced affinity for its substrate, the 5'-m7 G cap structure. Interacts (via late-budding domain) with host TSG101; this interaction is essential for budding and release of viral particles. Interacts with host RPLP0; this interaction may serve to load ribosome-like particles inside the virion. Interacts with host PML; this interaction induces PML bodies redistribution in the cytoplasm upon viral infection. In terms of processing, myristoylation is required for the role of RING finger protein Z in assembly and budding.

It is found in the virion. The protein resides in the host cytoplasm. It localises to the host perinuclear region. The protein localises to the host cell membrane. Functionally, plays a crucial role in virion assembly and budding. Expressed late in the virus life cycle, it acts as an inhibitor of viral transcription and RNA synthesis by interacting with the viral polymerase L. Presumably recruits the NP encapsidated genome to cellular membranes at budding sites via direct interaction with NP. Plays critical roles in the final steps of viral release by interacting with host TSG101, a member of the vacuolar protein-sorting pathway and using other cellular host proteins involved in vesicle formation pathway. The budding of the virus progeny occurs after association of protein Z with the viral glycoprotein complex SSP-GP1-GP2 at the cell periphery, step that requires myristoylation of protein Z. Also selectively represses protein production by associating with host eIF4E. In cell-based minigenome assay, has an inhibitory effect on the ribonucleoprotein machinery (vRNP), which is responsible for the replication and transcription of the viral genome. This chain is RING finger protein Z, found in Calomys callosus (Large vesper mouse).